Here is a 342-residue protein sequence, read N- to C-terminus: MSGFAKLKSWLYKASLFVSLILLIGFSVVLPIDSIAQASKSENNAFNTFIVVGALVVFGVFCIFIIIGRMLFHKSCLKDIPRRYIPITPADLPHRSSREAVLQNMERSKELTILLKKPKDPVIHDGLEPPRRCDYPLDEKLFPEYLNYADCIKSLTDRLKYHGLFLNNLDVRMNLEDTFADVVNSQFVNHNANKIQLEKAKEFIDLYETIRFSGKDVTRDQFIKFVKFCLYFGEVSLTRDTSFANLHNFRLNGSSNNIGRTESKYSINPFDENEYAQDDMHYFPEPPTHLVRESSISTVARHVSSGVDLTNSEEHPLDTDSDCNALRLKLSKADSYRSVIRH.

Residues 1 to 15 (MSGFAKLKSWLYKAS) are Cytoplasmic-facing. The helical transmembrane segment at 16–36 (LFVSLILLIGFSVVLPIDSIA) threads the bilayer. Topologically, residues 37–47 (QASKSENNAFN) are extracellular. Residues 48 to 68 (TFIVVGALVVFGVFCIFIIIG) traverse the membrane as a helical segment. The Cytoplasmic portion of the chain corresponds to 69–342 (RMLFHKSCLK…ADSYRSVIRH (274 aa)).

It belongs to the DLT1 family.

It localises to the membrane. Its function is as follows. Required for growth under high-pressure and low-temperature conditions. In Saccharomyces cerevisiae (strain RM11-1a) (Baker's yeast), this protein is Defect at low temperature protein 1 (DLT1).